A 2324-amino-acid polypeptide reads, in one-letter code: Acetyl-CoA carboxylase (2324 aa).

Met1 carries the N-acetylmethionine modification. Positions 1–34 (MEESSQPAKPLEMNPHSRFIIGSVSEDNSEDETS) are disordered. Residues Ser78 and Ser80 each carry the phosphoserine modification. A Biotin carboxylation domain is found at 117 to 618 (VIEKVLIANN…DTGWLDRLIA (502 aa)). The ATP-grasp domain occupies 275–466 (QKRILNVPQE…LPAAQLQIAM (192 aa)). ATP is bound at residue 315 to 320 (GGGGKG). Mn(2+) contacts are provided by Glu424, Glu437, and Asn439. Arg441 is a catalytic residue. In terms of domain architecture, Biotinyl-binding spans 745-819 (FEKENDPSIL…DPGCVIAKLQ (75 aa)). Lys786 bears the N6-biotinyllysine mark. Ser1193 carries the post-translational modification Phosphoserine. The 339-residue stretch at 1553 to 1891 (PYVTKDLLQS…SVYSPVPILK (339 aa)) folds into the CoA carboxyltransferase N-terminal domain. Residues 1553–2211 (PYVTKDLLQS…EDVVKKKIHD (659 aa)) are carboxyltransferase. Arg1800, Lys2104, and Arg2106 together coordinate CoA. Positions 1895–2211 (PIDRTIDFVP…EDVVKKKIHD (317 aa)) constitute a CoA carboxyltransferase C-terminal domain.

The cofactor is biotin. It depends on Mn(2+) as a cofactor.

It localises to the cytoplasm. It catalyses the reaction hydrogencarbonate + acetyl-CoA + ATP = malonyl-CoA + ADP + phosphate + H(+). The enzyme catalyses N(6)-biotinyl-L-lysyl-[protein] + hydrogencarbonate + ATP = N(6)-carboxybiotinyl-L-lysyl-[protein] + ADP + phosphate + H(+). It participates in lipid metabolism; malonyl-CoA biosynthesis; malonyl-CoA from acetyl-CoA: step 1/1. With respect to regulation, by phosphorylation. Catalyzes the rate-limiting reaction in the biogenesis of long-chain fatty acids. Carries out three functions: biotin carboxyl carrier protein, biotin carboxylase and carboxyltransferase. This chain is Acetyl-CoA carboxylase (ACAC), found in Gallus gallus (Chicken).